The following is a 226-amino-acid chain: Cytidylate kinase (226 aa).

12–20 serves as a coordination point for ATP; sequence GPSGAGKGT.

It belongs to the cytidylate kinase family. Type 1 subfamily.

The protein resides in the cytoplasm. The catalysed reaction is CMP + ATP = CDP + ADP. It carries out the reaction dCMP + ATP = dCDP + ADP. This chain is Cytidylate kinase, found in Xanthomonas campestris pv. campestris (strain B100).